The sequence spans 190 residues: UPF0301 protein Rpic_0619 (190 aa).

This sequence belongs to the UPF0301 (AlgH) family.

In Ralstonia pickettii (strain 12J), this protein is UPF0301 protein Rpic_0619.